Here is a 299-residue protein sequence, read N- to C-terminus: ATP phosphoribosyltransferase (299 aa).

The protein belongs to the ATP phosphoribosyltransferase family. Long subfamily. As to quaternary structure, equilibrium between an active dimeric form, an inactive hexameric form and higher aggregates. Interconversion between the various forms is largely reversible and is influenced by the natural substrates and inhibitors of the enzyme. Mg(2+) serves as cofactor.

It is found in the cytoplasm. The enzyme catalyses 1-(5-phospho-beta-D-ribosyl)-ATP + diphosphate = 5-phospho-alpha-D-ribose 1-diphosphate + ATP. It participates in amino-acid biosynthesis; L-histidine biosynthesis; L-histidine from 5-phospho-alpha-D-ribose 1-diphosphate: step 1/9. With respect to regulation, feedback inhibited by histidine. In terms of biological role, catalyzes the condensation of ATP and 5-phosphoribose 1-diphosphate to form N'-(5'-phosphoribosyl)-ATP (PR-ATP). Has a crucial role in the pathway because the rate of histidine biosynthesis seems to be controlled primarily by regulation of HisG enzymatic activity. This Escherichia coli O157:H7 protein is ATP phosphoribosyltransferase.